The primary structure comprises 414 residues: DNA primase small subunit PriS (414 aa).

Catalysis depends on residues D98, D100, and D312.

The protein belongs to the eukaryotic-type primase small subunit family. Heterodimer of a small subunit (PriS) and a large subunit (PriL). Mg(2+) serves as cofactor. Requires Mn(2+) as cofactor.

Functionally, catalytic subunit of DNA primase, an RNA polymerase that catalyzes the synthesis of short RNA molecules used as primers for DNA polymerase during DNA replication. The small subunit contains the primase catalytic core and has DNA synthesis activity on its own. Binding to the large subunit stabilizes and modulates the activity, increasing the rate of DNA synthesis while decreasing the length of the DNA fragments, and conferring RNA synthesis capability. The DNA polymerase activity may enable DNA primase to also catalyze primer extension after primer synthesis. May also play a role in DNA repair. This is DNA primase small subunit PriS from Methanosarcina acetivorans (strain ATCC 35395 / DSM 2834 / JCM 12185 / C2A).